We begin with the raw amino-acid sequence, 458 residues long: Exodeoxyribonuclease 7 large subunit (458 aa).

This sequence belongs to the XseA family. As to quaternary structure, heterooligomer composed of large and small subunits.

It localises to the cytoplasm. The catalysed reaction is Exonucleolytic cleavage in either 5'- to 3'- or 3'- to 5'-direction to yield nucleoside 5'-phosphates.. Its function is as follows. Bidirectionally degrades single-stranded DNA into large acid-insoluble oligonucleotides, which are then degraded further into small acid-soluble oligonucleotides. In Yersinia enterocolitica serotype O:8 / biotype 1B (strain NCTC 13174 / 8081), this protein is Exodeoxyribonuclease 7 large subunit.